The sequence spans 601 residues: Elongation factor 4 (601 aa).

The tr-type G domain occupies 6-188; sequence DHIRNFSIVA…AIVHQLPPPR (183 aa). Residues 18–23 and 135–138 contribute to the GTP site; these read DHGKST and NKVD.

It belongs to the TRAFAC class translation factor GTPase superfamily. Classic translation factor GTPase family. LepA subfamily.

It is found in the cell inner membrane. The enzyme catalyses GTP + H2O = GDP + phosphate + H(+). In terms of biological role, required for accurate and efficient protein synthesis under certain stress conditions. May act as a fidelity factor of the translation reaction, by catalyzing a one-codon backward translocation of tRNAs on improperly translocated ribosomes. Back-translocation proceeds from a post-translocation (POST) complex to a pre-translocation (PRE) complex, thus giving elongation factor G a second chance to translocate the tRNAs correctly. Binds to ribosomes in a GTP-dependent manner. The sequence is that of Elongation factor 4 from Mesorhizobium japonicum (strain LMG 29417 / CECT 9101 / MAFF 303099) (Mesorhizobium loti (strain MAFF 303099)).